We begin with the raw amino-acid sequence, 485 residues long: Forkhead box protein N3 (485 aa).

2 disordered regions span residues 1–54 and 85–108; these read MGPV…KGGM and PVQD…DAKQ. The segment covering 16–30 has biased composition (polar residues); it reads ISVSSQCYRSSTLSN. The fork-head DNA-binding region spans 113-209; the sequence is KPPYSFSCLI…QALKKTPYHP (97 aa). Disordered regions lie at residues 316 to 357 and 401 to 449; these read MESE…ISSS and PLVE…MKEA. Positions 338–357 are enriched in low complexity; it reads SSAKSANKRSSSPSDSISSS. Residues 410 to 422 show a composition bias toward basic residues; sequence QHKKKQHLLKLRR.

At early cleavage stages, localized within the animal half of the embryo. At gastrulation, expression expands over the whole embryo excluding the future endodermal cells of the blastopore. During neurulation, expressed in the prospective eye field and in the neural crest cells. Strongly enriched in the eye vesicles at stage 26. From stage 29 onwards, expressed predominantly in the eye, the branchial arches and the vagal ganglion. At stage 38, expressed throughout the head with strongest expression in the head mesenchyme and the eye lens.

It localises to the nucleus. Acts as a transcriptional repressor. May be involved in DNA damage-inducible cell cycle arrests (checkpoints). This Xenopus laevis (African clawed frog) protein is Forkhead box protein N3.